The following is a 50-amino-acid chain: Monellin chain B (50 aa).

As to quaternary structure, heterodimer of an A chain and a B chain.

Functionally, taste-modifying protein; intensely sweet-tasting protein. The sequence is that of Monellin chain B from Dioscoreophyllum cumminsii (Serendipity berry).